Reading from the N-terminus, the 156-residue chain is 6,7-dimethyl-8-ribityllumazine synthase (156 aa).

5-amino-6-(D-ribitylamino)uracil is bound by residues Phe-25, 59–61 (AWE), and 83–85 (AVI). 88 to 89 (ST) lines the (2S)-2-hydroxy-3-oxobutyl phosphate pocket. Catalysis depends on His-91, which acts as the Proton donor. Asn-116 is a 5-amino-6-(D-ribitylamino)uracil binding site. Arg-130 serves as a coordination point for (2S)-2-hydroxy-3-oxobutyl phosphate.

The protein belongs to the DMRL synthase family. In terms of assembly, forms an icosahedral capsid composed of 60 subunits, arranged as a dodecamer of pentamers.

The catalysed reaction is (2S)-2-hydroxy-3-oxobutyl phosphate + 5-amino-6-(D-ribitylamino)uracil = 6,7-dimethyl-8-(1-D-ribityl)lumazine + phosphate + 2 H2O + H(+). Its pathway is cofactor biosynthesis; riboflavin biosynthesis; riboflavin from 2-hydroxy-3-oxobutyl phosphate and 5-amino-6-(D-ribitylamino)uracil: step 1/2. Catalyzes the formation of 6,7-dimethyl-8-ribityllumazine by condensation of 5-amino-6-(D-ribitylamino)uracil with 3,4-dihydroxy-2-butanone 4-phosphate. This is the penultimate step in the biosynthesis of riboflavin. This chain is 6,7-dimethyl-8-ribityllumazine synthase, found in Acinetobacter baylyi (strain ATCC 33305 / BD413 / ADP1).